Here is a 424-residue protein sequence, read N- to C-terminus: 3-ketoacyl-CoA thiolase B, peroxisomal (424 aa).

The transit peptide at 1 to 26 (MHRLQVVLGHLAGRSESSSALQAAPC) directs the protein to the peroxisome. Residues 1–26 (MHRLQVVLGHLAGRSESSSALQAAPC) are PTS2-type peroxisomal targeting signal. The active-site Acyl-thioester intermediate is C123. N6-acetyllysine occurs at positions 173 and 234. CoA contacts are provided by R249, T252, and S276. Residue C408 is the Proton donor/acceptor of the active site.

This sequence belongs to the thiolase-like superfamily. Thiolase family. As to quaternary structure, homodimer. Interacts (via PTS2-type peroxisomal targeting signal region) with PEX7; leading to its translocation into peroxisomes.

It is found in the peroxisome. The catalysed reaction is an acyl-CoA + acetyl-CoA = a 3-oxoacyl-CoA + CoA. It carries out the reaction 2 acetyl-CoA = acetoacetyl-CoA + CoA. It catalyses the reaction hexanoyl-CoA + acetyl-CoA = 3-oxooctanoyl-CoA + CoA. The enzyme catalyses tetradecanoyl-CoA + acetyl-CoA = 3-oxohexadecanoyl-CoA + CoA. The catalysed reaction is 3-oxohexadecanedioyl-CoA + CoA = tetradecanedioyl-CoA + acetyl-CoA. It carries out the reaction 3-oxo-(6Z,9Z,12Z,15Z,18Z,21Z)-tetracosahexaenoyl-CoA + CoA = (4Z,7Z,10Z,13Z,16Z,19Z)-docosahexaenoyl-CoA + acetyl-CoA. It participates in lipid metabolism; peroxisomal fatty acid beta-oxidation. Responsible for the thiolytic cleavage of straight chain 3-keto fatty acyl-CoAs (3-oxoacyl-CoAs). Plays an important role in fatty acid peroxisomal beta-oxidation. Catalyzes the cleavage of short, medium, long, and very long straight chain 3-oxoacyl-CoAs. Medium chain straight 3-oxoacyl-CoAs are preferred substrates. The protein is 3-ketoacyl-CoA thiolase B, peroxisomal of Rattus norvegicus (Rat).